Here is a 199-residue protein sequence, read N- to C-terminus: Protein-methionine-sulfoxide reductase heme-binding subunit MsrQ (199 aa).

The next 4 helical transmembrane spans lie at 8 to 28 (IIWL…WLFW), 82 to 102 (LWCF…ELGI), 116 to 136 (PYLT…LTST), and 153 to 173 (VVYL…KVLS).

Belongs to the MsrQ family. As to quaternary structure, heterodimer of a catalytic subunit (MsrP) and a heme-binding subunit (MsrQ). FMN serves as cofactor. Heme b is required as a cofactor.

The protein resides in the cell inner membrane. Its function is as follows. Part of the MsrPQ system that repairs oxidized periplasmic proteins containing methionine sulfoxide residues (Met-O), using respiratory chain electrons. Thus protects these proteins from oxidative-stress damage caused by reactive species of oxygen and chlorine generated by the host defense mechanisms. MsrPQ is essential for the maintenance of envelope integrity under bleach stress, rescuing a wide series of structurally unrelated periplasmic proteins from methionine oxidation, including the primary periplasmic chaperone SurA and the lipoprotein Pal. MsrQ provides electrons for reduction to the reductase catalytic subunit MsrP, using the quinone pool of the respiratory chain. This Salmonella arizonae (strain ATCC BAA-731 / CDC346-86 / RSK2980) protein is Protein-methionine-sulfoxide reductase heme-binding subunit MsrQ.